Reading from the N-terminus, the 581-residue chain is Ezrin (581 aa).

The 294-residue stretch at 2–295 (PKPINVRVTT…GNHELYMRRR (294 aa)) folds into the FERM domain. Position 60 is an N6-acetyllysine (lysine 60). The [IL]-x-C-x-x-[DE] motif signature appears at 115 to 120 (IYCPPE). Phosphotyrosine; by PDGFR is present on tyrosine 146. An interaction with SCYL3 region spans residues 244–581 (EIRNISFNDK…KQRIDEFEAM (338 aa)). Residues 302-462 (VQQMKAQARE…QDDLVKTREE (161 aa)) are a coiled coil. A disordered region spans residues 306 to 341 (KAQAREEKHQKQLERQQLETEKKRRETVEREKEQMM). Basic and acidic residues predominate over residues 308-341 (QAREEKHQKQLERQQLETEKKRRETVEREKEQMM). Tyrosine 354 bears the Phosphotyrosine; by PDGFR mark. Serine 366 is subject to Phosphoserine. Tyrosine 476 carries the post-translational modification Phosphotyrosine. A disordered region spans residues 534–560 (SQARDENKRTHNDIIHNENMRQGRDKY). The segment covering 535-560 (QARDENKRTHNDIIHNENMRQGRDKY) has biased composition (basic and acidic residues). Threonine 562 is subject to Phosphothreonine; by ROCK2 and PKC/PRKCI.

Interacts with PALS1 and NHERF2. Found in a complex with EZR, PODXL and NHERF2. Interacts with MCC, PLEKHG6, PODXL, SCYL3/PACE1, NHERF1 and TMEM8B. Interacts (when phosphorylated) with FES/FPS. Interacts with dimeric S100P, the interaction may be activating through unmasking of F-actin binding sites. Identified in complexes that contain VIM, EZR, AHNAK, BFSP1, BFSP2, ANK2, PLEC, PRX and spectrin. Detected in a complex composed of at least EZR, AHNAK, PPL and PRX. Interacts with PDPN (via cytoplasmic domain); activates RHOA and promotes epithelial-mesenchymal transition. Interacts with SPN/CD43 cytoplasmic tail, CD44 and ICAM2. Interacts with SLC9A3; interaction targets SLC9A3 to the apical membrane. Interacts with SLC9A1; regulates interactions of SLC9A1 with cytoskeletal and promotes stress fiber formation. Interacts with CLIC5; may work together in a complex which also includes RDX and MYO6 to stabilize linkages between the plasma membrane and subjacent actin cytoskeleton at the base of stereocilia. Phosphorylated by tyrosine-protein kinases. Phosphorylation by ROCK2 suppresses the head-to-tail association of the N-terminal and C-terminal halves resulting in an opened conformation which is capable of actin and membrane-binding. Post-translationally, S-nitrosylation is induced by interferon-gamma and oxidatively-modified low-densitity lipoprotein (LDL(ox)) possibly implicating the iNOS-S100A8/9 transnitrosylase complex. Detected in eye lens fiber cells (at protein level).

The protein localises to the apical cell membrane. It localises to the cell projection. The protein resides in the microvillus membrane. It is found in the ruffle membrane. Its subcellular location is the cytoplasm. The protein localises to the cell cortex. It localises to the cytoskeleton. The protein resides in the microvillus. With respect to regulation, a head-to-tail association, of the N-terminal and C-terminal halves results in a closed conformation (inactive form) which is incapable of actin or membrane-binding. Probably involved in connections of major cytoskeletal structures to the plasma membrane. In epithelial cells, required for the formation of microvilli and membrane ruffles on the apical pole. Along with PLEKHG6, required for normal macropinocytosis. This is Ezrin (EZR) from Bos taurus (Bovine).